The chain runs to 570 residues: Sulfite reductase [NADPH] hemoprotein beta-component (570 aa).

[4Fe-4S] cluster-binding residues include Cys434, Cys440, Cys479, and Cys483. Siroheme is bound at residue Cys483.

It belongs to the nitrite and sulfite reductase 4Fe-4S domain family. As to quaternary structure, alpha(8)-beta(8). The alpha component is a flavoprotein, the beta component is a hemoprotein. Requires siroheme as cofactor. [4Fe-4S] cluster serves as cofactor.

The catalysed reaction is hydrogen sulfide + 3 NADP(+) + 3 H2O = sulfite + 3 NADPH + 4 H(+). Its pathway is sulfur metabolism; hydrogen sulfide biosynthesis; hydrogen sulfide from sulfite (NADPH route): step 1/1. Functionally, component of the sulfite reductase complex that catalyzes the 6-electron reduction of sulfite to sulfide. This is one of several activities required for the biosynthesis of L-cysteine from sulfate. The sequence is that of Sulfite reductase [NADPH] hemoprotein beta-component from Salmonella agona (strain SL483).